Consider the following 342-residue polypeptide: MTDKKEILVHDMSLRDGMHSVRHQFSLAQMIELSTALDEAGVPLIEVTHGDGLGGHSVNYGFAAHSDREYLEAVIPRMQQARVSALLLPGIGTVDDLRMAADCGVHCLRVATQCTEADVAEQHIGLSRKLGLDTVGFLMMAHMLPAEGLLEQARLMESYGANCVYMTDSAGYMLPEEVREKVSALREGLADETEVGFHGHHNLAMGVANSVAAVEAGAKRIDGSVAGFGAGAGNTPLEVFIAVCERMGICTGVDLGRIQDVAEDVALPMMDAPTRIDRDSLTLGYAGVYSSFLLHAKRAEANHGVPARDILVELGARRTVGGQEDMIEDVALEMSRARSASA.

Residues 7 to 259 (ILVHDMSLRD…CTGVDLGRIQ (253 aa)) enclose the Pyruvate carboxyltransferase domain. 15–16 (RD) contacts substrate. Residue Asp-16 coordinates Mn(2+). The active-site Proton acceptor is His-19. Residues Ser-169 and His-198 each contribute to the substrate site. The Mn(2+) site is built by His-198 and His-200. Tyr-289 serves as a coordination point for substrate.

Belongs to the 4-hydroxy-2-oxovalerate aldolase family.

The catalysed reaction is (S)-4-hydroxy-2-oxopentanoate = acetaldehyde + pyruvate. This is 4-hydroxy-2-oxovalerate aldolase from Alkalilimnicola ehrlichii (strain ATCC BAA-1101 / DSM 17681 / MLHE-1).